A 123-amino-acid polypeptide reads, in one-letter code: MGNRVCCGGSWSCPSTFQKKKKTGSQTRRTLKPQPQQLQQNLPKGHETTGHTYERVLQQQGSQERSPGLMSEDSNLHYADIQVCSRPHAREVKHVHLENATEYATLRFPQATPRYDSKNGTLV.

Residues 17–74 form a disordered region; it reads FQKKKKTGSQTRRTLKPQPQQLQQNLPKGHETTGHTYERVLQQQGSQERSPGLMSEDS. Thr-30 carries the phosphothreonine modification. Over residues 32–43 the composition is skewed to low complexity; the sequence is KPQPQQLQQNLP. Residues 44-54 are compositionally biased toward basic and acidic residues; sequence KGHETTGHTYE. Position 62 is a phosphoserine (Ser-62).

This is an uncharacterized protein from Homo sapiens (Human).